Here is a 276-residue protein sequence, read N- to C-terminus: Bis(5'-nucleosyl)-tetraphosphatase, symmetrical (276 aa).

It belongs to the Ap4A hydrolase family.

The enzyme catalyses P(1),P(4)-bis(5'-adenosyl) tetraphosphate + H2O = 2 ADP + 2 H(+). Hydrolyzes diadenosine 5',5'''-P1,P4-tetraphosphate to yield ADP. The polypeptide is Bis(5'-nucleosyl)-tetraphosphatase, symmetrical (Legionella pneumophila subsp. pneumophila (strain Philadelphia 1 / ATCC 33152 / DSM 7513)).